A 360-amino-acid polypeptide reads, in one-letter code: NAD(P)H-quinone oxidoreductase subunit 1, chloroplastic (360 aa).

8 helical membrane passes run 27–47 (VWIF…VLVI), 98–118 (FSIG…VIPF), 129–149 (IGIF…LMSG), 165–185 (AAQS…ISLL), 203–223 (FWGW…ISSL), 253–273 (FGLF…FVTI), 297–317 (VFGT…VLVI), and 340–360 (FLLP…LLSL).

This sequence belongs to the complex I subunit 1 family. NDH is composed of at least 16 different subunits, 5 of which are encoded in the nucleus.

The protein resides in the plastid. It is found in the chloroplast thylakoid membrane. The catalysed reaction is a plastoquinone + NADH + (n+1) H(+)(in) = a plastoquinol + NAD(+) + n H(+)(out). The enzyme catalyses a plastoquinone + NADPH + (n+1) H(+)(in) = a plastoquinol + NADP(+) + n H(+)(out). In terms of biological role, NDH shuttles electrons from NAD(P)H:plastoquinone, via FMN and iron-sulfur (Fe-S) centers, to quinones in the photosynthetic chain and possibly in a chloroplast respiratory chain. The immediate electron acceptor for the enzyme in this species is believed to be plastoquinone. Couples the redox reaction to proton translocation, and thus conserves the redox energy in a proton gradient. This Draba nemorosa (Woodland whitlowgrass) protein is NAD(P)H-quinone oxidoreductase subunit 1, chloroplastic.